The sequence spans 98 residues: UPF0473 protein GTNG_2486 (98 aa).

It belongs to the UPF0473 family.

The protein is UPF0473 protein GTNG_2486 of Geobacillus thermodenitrificans (strain NG80-2).